The sequence spans 718 residues: Exostosin-2 (718 aa).

At 1 to 25 (MCASVKSNIRGPALIPRMKTKHRIY) the chain is on the cytoplasmic side. A helical; Signal-anchor for type II membrane protein transmembrane segment spans residues 26–46 (YVTLFSIVLLGLIATGMFQFW). The Lumenal segment spans residues 47–718 (PHSIESSSDG…LKSFPNIGSL (672 aa)). 4 cysteine pairs are disulfide-bonded: cysteine 85–cysteine 90, cysteine 96–cysteine 151, cysteine 286–cysteine 300, and cysteine 318–cysteine 339. Residue asparagine 288 is glycosylated (N-linked (GlcNAc...) asparagine). Leucine 461, arginine 465, asparagine 490, and asparagine 517 together coordinate UDP. Positions 465, 490, 517, 522, 538, 539, and 540 each coordinate UDP-N-acetyl-alpha-D-glucosamine. Residues aspartate 538 and aspartate 539 each contribute to the UDP site. Position 540 (aspartate 540) interacts with Mn(2+). A protein contacts are provided by tyrosine 582 and serine 584. Residues cysteine 626 and cysteine 676 are joined by a disulfide bond. 2 residues coordinate UDP-N-acetyl-alpha-D-glucosamine: glutamate 627 and aspartate 628. N-linked (GlcNAc...) asparagine glycosylation occurs at asparagine 637. Residues lysine 651 and lysine 653 each contribute to the a protein site. Position 673 (arginine 673) interacts with UDP-N-acetyl-alpha-D-glucosamine.

This sequence belongs to the glycosyltransferase 47 family. Part of the heparan sulfate polymerase, a dimeric complex composed of EXT1 and EXT2. Could also form homooligomeric complexes. Interacts with NDST1. Interacts with GALNT5. The cofactor is Mn(2+). In terms of processing, N-glycosylated at Asn-637. Post-translationally, a soluble form is generated by proteolytic processing. As to expression, expressed in heart, brain, spleen, lung, liver, skeletal muscle and testis. Heart shows a high expression.

Its subcellular location is the golgi apparatus membrane. The protein resides in the golgi apparatus. It localises to the cis-Golgi network membrane. It is found in the endoplasmic reticulum membrane. The protein localises to the secreted. It catalyses the reaction 3-O-{[(1-&gt;4)-beta-D-GlcA-(1-&gt;4)-alpha-D-GlcNAc](n)-(1-&gt;4)-beta-D-GlcA-(1-&gt;3)-beta-D-Gal-(1-&gt;3)-beta-D-Gal-(1-&gt;4)-beta-D-Xyl}-L-seryl-[protein] + UDP-N-acetyl-alpha-D-glucosamine = 3-O-{alpha-D-GlcNAc-[(1-&gt;4)-beta-D-GlcA-(1-&gt;4)-alpha-D-GlcNAc](n)-(1-&gt;4)-beta-D-GlcA-(1-&gt;3)-beta-D-Gal-(1-&gt;3)-beta-D-Gal-(1-&gt;4)-beta-D-Xyl}-L-seryl-[protein] + UDP + H(+). It functions in the pathway protein modification; protein glycosylation. Its function is as follows. Glycosyltransferase forming with EXT1 the heterodimeric heparan sulfate polymerase which catalyzes the elongation of the heparan sulfate glycan backbone. Glycan backbone extension consists in the alternating transfer of (1-&gt;4)-beta-D-GlcA and (1-&gt;4)-alpha-D-GlcNAc residues from their respective UDP-sugar donors. Both EXT1 and EXT2 are required for the full activity of the polymerase since EXT1 bears the N-acetylglucosaminyl-proteoglycan 4-beta-glucuronosyltransferase activity within the complex while EXT2 carries the glucuronosyl-N-acetylglucosaminyl-proteoglycan 4-alpha-N-acetylglucosaminyltransferase activity. Heparan sulfate proteoglycans are ubiquitous components of the extracellular matrix and play an important role in tissue homeostasis and signaling. In Mus musculus (Mouse), this protein is Exostosin-2.